The following is a 367-amino-acid chain: 2-aminoethylphosphonate--pyruvate transaminase (367 aa).

Lys193 carries the post-translational modification N6-(pyridoxal phosphate)lysine.

The protein belongs to the class-V pyridoxal-phosphate-dependent aminotransferase family. PhnW subfamily. In terms of assembly, homodimer. Requires pyridoxal 5'-phosphate as cofactor.

It carries out the reaction (2-aminoethyl)phosphonate + pyruvate = phosphonoacetaldehyde + L-alanine. Its function is as follows. Involved in phosphonate degradation. The protein is 2-aminoethylphosphonate--pyruvate transaminase of Vibrio vulnificus (strain CMCP6).